Here is a 960-residue protein sequence, read N- to C-terminus: Pentatricopeptide repeat-containing protein At3g63370, chloroplastic (960 aa).

Residues 1 to 64 (MEYAVTNMRL…PKLACFDGVL (64 aa)) constitute a chloroplast transit peptide. PPR repeat units follow at residues 79–109 (PVEA…IFKT), 115–145 (LDFL…MPDR), 146–180 (TAFA…GVPL), 181–215 (GLSS…GYHS), 216–246 (TGFI…FQEK), 248–282 (DAVL…GPAP), 283–317 (NSYT…STHS), 319–349 (ELYV…MNNA), 350–384 (DVVT…GHKS), 385–419 (DEVS…GWDS), 420–450 (NLQV…MHDK), 451–485 (DLIS…RMEI), 486–516 (DEMI…ILRK), 520–550 (DTVI…IKGK), 551–585 (DVVS…GLSA), 586–620 (DSVA…GFCL), 621–651 (EGSI…IERK), 652–686 (GLLQ…NVSP), 687–717 (DHIS…MEHE), and 723–753 (WPEH…MKTE). A type E motif region spans residues 758 to 833 (VWCALLAACR…HPGCSWIEMD (76 aa)). The tract at residues 834–864 (GKVHKFTARDKSHPESKEIYEKLSEVTRKLE) is type E(+) motif. The interval 865–960 (REVGYVADTK…SGLCSCGDSW (96 aa)) is type DYW motif.

It belongs to the PPR family. PCMP-H subfamily.

The protein localises to the plastid. Its subcellular location is the chloroplast. Involved in RNA editing event in chloroplasts. Required for the editing of a single site in rps14 transcript. The chain is Pentatricopeptide repeat-containing protein At3g63370, chloroplastic (PCMP-H83) from Arabidopsis thaliana (Mouse-ear cress).